We begin with the raw amino-acid sequence, 132 residues long: NLP effector protein 15 (132 aa).

The Conserved undecapeptide motif I signature appears at methionine 1 to aspartate 9. Positions glycine 16–glutamate 22 match the Hepta-peptide GHRHDWE motif II motif.

This sequence belongs to the Necrosis inducing protein (NPP1) family.

The protein resides in the secreted. Secreted effector that contributes moderately to virulence during infection by P.capsici. Causes only small yellow areas at 3 days after inoculation of host C.annuum leaves; these areas expand somewhat and became necrotic at 7 days after inoculation. Leads only to chlorotic areas, without necrosis at 7 days after non-host N.benthamiana leaves infection. The protein is NLP effector protein 15 of Phytophthora capsici.